A 597-amino-acid chain; its full sequence is tRNA uridine 5-carboxymethylaminomethyl modification enzyme MnmG (597 aa).

10–15 (GGGHAG) is an FAD binding site. 267–281 (GPRYCPSIEDKVVRF) is a binding site for NAD(+).

It belongs to the MnmG family. In terms of assembly, homodimer. Heterotetramer of two MnmE and two MnmG subunits. FAD is required as a cofactor.

It is found in the cytoplasm. NAD-binding protein involved in the addition of a carboxymethylaminomethyl (cmnm) group at the wobble position (U34) of certain tRNAs, forming tRNA-cmnm(5)s(2)U34. This is tRNA uridine 5-carboxymethylaminomethyl modification enzyme MnmG from Thermus thermophilus (strain ATCC 27634 / DSM 579 / HB8).